Consider the following 111-residue polypeptide: Universal stress protein B (111 aa).

The helical transmembrane segment at 1-21 (MISTVSLFWALCVVCIVNMAR) threads the bilayer. Residues 22-89 (YFSSLRALLV…IRRCERVRRQ (68 aa)) are Cytoplasmic-facing. A helical membrane pass occupies residues 90-110 (FLLTSALCGLVVVSLIALMIW). Residue H111 is a topological domain, periplasmic.

Belongs to the universal stress protein B family.

It localises to the cell inner membrane. The chain is Universal stress protein B (uspB) from Salmonella choleraesuis (strain SC-B67).